The chain runs to 256 residues: MGDGFLSIFKTKALILKTQDYKENDKLVWLFTEKIGKVCAIAKGAKKSKSKFIASTQTFCFGEYVLYRGKSLYSINEVEIIDSFQSLLSDMDTITYGSYFCELILIALEQEQSDRELFKDFIKSFYFLKNQAMDLEILARTFELKLLKATGYGFDFEKCCICGKRINKTNYLSIQYYGGVCDNCEKTGGFKISYAAYGVLKFLYKTSIENAHIISVSNEIKEEVYKVLDMFISQSYSKKPKSLEIFNYLKRSEYNE.

It belongs to the RecO family.

In terms of biological role, involved in DNA repair and RecF pathway recombination. The protein is DNA repair protein RecO of Clostridium novyi (strain NT).